Consider the following 344-residue polypeptide: tRNA N6-adenosine threonylcarbamoyltransferase (344 aa).

The Fe cation site is built by His110 and His114. Substrate is bound by residues 133–137 (VMSGA), Asp166, Gly179, and Asn278. Fe cation is bound at residue Asp303.

The protein belongs to the KAE1 / TsaD family. The cofactor is Fe(2+).

The protein localises to the cytoplasm. It catalyses the reaction L-threonylcarbamoyladenylate + adenosine(37) in tRNA = N(6)-L-threonylcarbamoyladenosine(37) in tRNA + AMP + H(+). Functionally, required for the formation of a threonylcarbamoyl group on adenosine at position 37 (t(6)A37) in tRNAs that read codons beginning with adenine. Is involved in the transfer of the threonylcarbamoyl moiety of threonylcarbamoyl-AMP (TC-AMP) to the N6 group of A37, together with TsaE and TsaB. TsaD likely plays a direct catalytic role in this reaction. This is tRNA N6-adenosine threonylcarbamoyltransferase from Chlamydia felis (strain Fe/C-56) (Chlamydophila felis).